The following is a 103-amino-acid chain: N(4)-acetylcytidine amidohydrolase (103 aa).

Residues I6–Q94 enclose the ASCH domain. K21 acts as the Proton acceptor in catalysis. T24 serves as the catalytic Nucleophile. E74 (proton donor) is an active-site residue.

The protein belongs to the N(4)-acetylcytidine amidohydrolase family.

The catalysed reaction is N(4)-acetylcytidine + H2O = cytidine + acetate + H(+). It carries out the reaction N(4)-acetyl-2'-deoxycytidine + H2O = 2'-deoxycytidine + acetate + H(+). It catalyses the reaction N(4)-acetylcytosine + H2O = cytosine + acetate + H(+). In terms of biological role, catalyzes the hydrolysis of N(4)-acetylcytidine (ac4C). The protein is N(4)-acetylcytidine amidohydrolase (yqfB) of Salmonella schwarzengrund (strain CVM19633).